The chain runs to 245 residues: tRNA (guanine-N(1)-)-methyltransferase (245 aa).

Residues Gly-111 and 131–136 each bind S-adenosyl-L-methionine; that span reads IGDYVL.

The protein belongs to the RNA methyltransferase TrmD family. Homodimer.

It is found in the cytoplasm. The enzyme catalyses guanosine(37) in tRNA + S-adenosyl-L-methionine = N(1)-methylguanosine(37) in tRNA + S-adenosyl-L-homocysteine + H(+). Functionally, specifically methylates guanosine-37 in various tRNAs. This chain is tRNA (guanine-N(1)-)-methyltransferase, found in Caldicellulosiruptor saccharolyticus (strain ATCC 43494 / DSM 8903 / Tp8T 6331).